Here is a 130-residue protein sequence, read N- to C-terminus: Small ribosomal subunit protein uS8 (130 aa).

This sequence belongs to the universal ribosomal protein uS8 family. As to quaternary structure, part of the 30S ribosomal subunit.

Functionally, one of the primary rRNA binding proteins, it binds directly to 16S rRNA central domain where it helps coordinate assembly of the platform of the 30S subunit. The sequence is that of Small ribosomal subunit protein uS8 from Cenarchaeum symbiosum (strain A).